Here is a 147-residue protein sequence, read N- to C-terminus: Ubiquitin-conjugating enzyme E2 D3 (147 aa).

In terms of domain architecture, UBC core spans 1 to 147; that stretch reads MALKRINKEL…SREWTQKYAM (147 aa). C21 and C107 are disulfide-bonded. The Glycyl thioester intermediate role is filled by C85.

This sequence belongs to the ubiquitin-conjugating enzyme family. Interacts with SCF (SKP1-CUL1-F-box protein) E3 ubiquitin ligase complex; when Cullin is neddylated, the interaction between the E2 and the SCF complex is strengthened. Interacts with DAPK3. Interacts with BRCA1; the DNA damage checkpoint promotes the association with BRCA1 after ionizing radiation. Interacts non-covalently with ubiquitin. Interacts with E3 ubiquitin-protein ligase CBLC. Interacts with UBTD1. Interacts with RIGI and RNF135; involved in RIGI ubiquitination and activation. Phosphorylated by AURKB.

The protein resides in the cell membrane. The protein localises to the endosome membrane. The catalysed reaction is S-ubiquitinyl-[E1 ubiquitin-activating enzyme]-L-cysteine + [E2 ubiquitin-conjugating enzyme]-L-cysteine = [E1 ubiquitin-activating enzyme]-L-cysteine + S-ubiquitinyl-[E2 ubiquitin-conjugating enzyme]-L-cysteine.. The enzyme catalyses S-ubiquitinyl-[E1 ubiquitin-activating enzyme]-L-cysteine + [acceptor protein]-L-lysine = [E1 ubiquitin-activating enzyme]-L-cysteine + N(6)-monoubiquitinyl-[acceptor protein]-L-lysine.. It functions in the pathway protein modification; protein ubiquitination. In terms of biological role, accepts ubiquitin from the E1 complex and catalyzes its covalent attachment to other proteins. In vitro catalyzes 'Lys-11'-, as well as 'Lys-48'-linked polyubiquitination. Cooperates with the E2 CDC34 and the SCF(FBXW11) E3 ligase complex for the polyubiquitination of NFKBIA leading to its subsequent proteasomal degradation. Acts as an initiator E2, priming the phosphorylated NFKBIA target at positions 'Lys-21' and/or 'Lys-22' with a monoubiquitin. Ubiquitin chain elongation is then performed by CDC34, building ubiquitin chains from the UBE2D3-primed NFKBIA-linked ubiquitin. Also acts as an initiator E2, in conjunction with RNF8, for the priming of PCNA. Monoubiquitination of PCNA, and its subsequent polyubiquitination, are essential events in the operation of the DNA damage tolerance (DDT) pathway that is activated after DNA damage caused by UV or chemical agents during S-phase. Associates with the BRCA1/BARD1 E3 ligase complex to perform ubiquitination at DNA damage sites following ionizing radiation leading to DNA repair. Targets DAPK3 for ubiquitination which influences promyelocytic leukemia protein nuclear body (PML-NB) formation in the nucleus. In conjunction with the MDM2 and TOPORS E3 ligases, functions ubiquitination of p53/TP53. In conjunction with the CBL E3 ligase, targets EGFR for polyubiquitination at the plasma membrane as well as during its internalization and transport on endosomes. In conjunction with the STUB1 E3 quality control E3 ligase, ubiquitinates unfolded proteins to catalyze their immediate destruction. Together with RNF135, catalyzes the viral RNA-dependent 'Lys-63'-linked polyubiquitination of RIGI to activate the downstream signaling pathway that leads to interferon beta production. Together with ZNF598, catalyzes ubiquitination of 40S ribosomal proteins in response to ribosome collisions. In cooperation with the GATOR2 complex, catalyzes 'Lys-6'-linked ubiquitination of NPRL2. The sequence is that of Ubiquitin-conjugating enzyme E2 D3 (UBE2D3) from Bos taurus (Bovine).